Here is a 270-residue protein sequence, read N- to C-terminus: MSVPIDRINTVDTLANTLESNLKFFPEKIHFNIRGKLIVIDRVELPILPTTVLALLFPNGFHLLLKHEGGDVSSCFKCHKIDPSICKWILDTYLPLFKKSNNAYPSKIAFNPISNTTLVLFLTECCNIYLFSENKKPVDQKIRSDLLEQTFKNNDVFESADKKKIRKGLSDGPLVDALQHCGFRYNDKWAKRVKEPKLMSLMSYIITTVESSSLSEEFLSKILKLWGQPGNKCWWINEVIKVNGSLINVWRRKQWLLEVTIMGNRENSQD.

The protein localises to the cytoplasm. This is an uncharacterized protein from Schizosaccharomyces pombe (strain 972 / ATCC 24843) (Fission yeast).